The sequence spans 108 residues: Replication restart protein PriB (108 aa).

One can recognise an SSB domain in the interval Ile-8–Asp-108.

This sequence belongs to the PriB family. As to quaternary structure, homodimer. Interacts with PriA and DnaT. Component of the replication restart primosome. Primosome assembly occurs via a 'hand-off' mechanism. PriA binds to replication forks, subsequently PriB then DnaT bind; DnaT then displaces ssDNA to generate the helicase loading substrate.

Involved in the restart of stalled replication forks, which reloads the replicative helicase on sites other than the origin of replication; the PriA-PriB pathway is the major replication restart pathway. During primosome assembly it facilitates complex formation between PriA and DnaT on DNA; stabilizes PriA on DNA. Stimulates the DNA unwinding activity of PriA helicase. This chain is Replication restart protein PriB, found in Haemophilus influenzae (strain ATCC 51907 / DSM 11121 / KW20 / Rd).